The sequence spans 233 residues: Lectin (233 aa).

2 N-linked (GlcNAc...) asparagine glycosylation sites follow: N26 and N108. Mn(2+) is bound by residues E118 and D120. Ca(2+) is bound by residues D120, W122, N124, and E129. Residues E129 and H134 each coordinate Mn(2+).

Belongs to the leguminous lectin family. Monomer.

It is found in the secreted. Functionally, has metal-independent hemagglutinating activity towards erythrocytes from rabbit and human. Hemagglutinating activity is inhibited by glycoproteins fetuin, asialo-fetuin, thyroglobulin and azocasein but not by free carbohydrates. Inhibits ADP- and epinephrin-induced but not collagen-, fibrinogen, thrombin- or arachidonic acid-induced platelet aggregation in vitro. Has anticoagulant activity in vitro. This Bauhinia forficata (Brazilian orchid-tree) protein is Lectin.